The chain runs to 701 residues: UvrABC system protein B (701 aa).

One can recognise a Helicase ATP-binding domain in the interval 35 to 422 (RRIQGGAADT…GGDVVEQVIR (388 aa)). Residue 48 to 55 (GATGTGKT) participates in ATP binding. Positions 101 to 124 (YYDYYQPEAYVPQTDTYIEKDSSI) match the Beta-hairpin motif. Residues 439-605 (QIDDLVHEIR…PLRKKIADIL (167 aa)) enclose the Helicase C-terminal domain. The segment at 620-648 (ARSRGEKRGTPTPRSGALSGPDRVAEQAK) is disordered. The UVR domain occupies 656-691 (AALVEQLTEQMHQAAADLQFELAARLRDEIKELKRE).

This sequence belongs to the UvrB family. Forms a heterotetramer with UvrA during the search for lesions. Interacts with UvrC in an incision complex.

It localises to the cytoplasm. Its function is as follows. The UvrABC repair system catalyzes the recognition and processing of DNA lesions. A damage recognition complex composed of 2 UvrA and 2 UvrB subunits scans DNA for abnormalities. Upon binding of the UvrA(2)B(2) complex to a putative damaged site, the DNA wraps around one UvrB monomer. DNA wrap is dependent on ATP binding by UvrB and probably causes local melting of the DNA helix, facilitating insertion of UvrB beta-hairpin between the DNA strands. Then UvrB probes one DNA strand for the presence of a lesion. If a lesion is found the UvrA subunits dissociate and the UvrB-DNA preincision complex is formed. This complex is subsequently bound by UvrC and the second UvrB is released. If no lesion is found, the DNA wraps around the other UvrB subunit that will check the other stand for damage. The polypeptide is UvrABC system protein B (Thermobifida fusca (strain YX)).